Reading from the N-terminus, the 755-residue chain is Thermostable beta-glucosidase B (755 aa).

The active site involves Asp231.

The protein belongs to the glycosyl hydrolase 3 family.

It catalyses the reaction Hydrolysis of terminal, non-reducing beta-D-glucosyl residues with release of beta-D-glucose.. The protein operates within glycan metabolism; cellulose degradation. The polypeptide is Thermostable beta-glucosidase B (bglB) (Acetivibrio thermocellus (strain ATCC 27405 / DSM 1237 / JCM 9322 / NBRC 103400 / NCIMB 10682 / NRRL B-4536 / VPI 7372) (Clostridium thermocellum)).